The sequence spans 222 residues: 2-C-methyl-D-erythritol 4-phosphate cytidylyltransferase (222 aa).

This sequence belongs to the IspD/TarI cytidylyltransferase family. IspD subfamily.

It carries out the reaction 2-C-methyl-D-erythritol 4-phosphate + CTP + H(+) = 4-CDP-2-C-methyl-D-erythritol + diphosphate. It participates in isoprenoid biosynthesis; isopentenyl diphosphate biosynthesis via DXP pathway; isopentenyl diphosphate from 1-deoxy-D-xylulose 5-phosphate: step 2/6. In terms of biological role, catalyzes the formation of 4-diphosphocytidyl-2-C-methyl-D-erythritol from CTP and 2-C-methyl-D-erythritol 4-phosphate (MEP). This chain is 2-C-methyl-D-erythritol 4-phosphate cytidylyltransferase, found in Azobacteroides pseudotrichonymphae genomovar. CFP2.